The following is a 142-amino-acid chain: Large ribosomal subunit protein bL21 (142 aa).

A compositionally biased stretch (basic residues) spans 73 to 84 (KRRRQNSKRTRG). A disordered region spans residues 73 to 142 (KRRRQNSKRT…KAAAKAESAE (70 aa)). The span at 107 to 125 (KAAEKKAPKADAAEGEAAK) shows a compositional bias: basic and acidic residues. Over residues 126-135 (PKKAAPKKAA) the composition is skewed to basic residues.

Belongs to the bacterial ribosomal protein bL21 family. In terms of assembly, part of the 50S ribosomal subunit. Contacts protein L20.

In terms of biological role, this protein binds to 23S rRNA in the presence of protein L20. This Brucella canis (strain ATCC 23365 / NCTC 10854 / RM-666) protein is Large ribosomal subunit protein bL21.